A 338-amino-acid chain; its full sequence is Phenylalanine--tRNA ligase alpha subunit (338 aa).

A Mg(2+)-binding site is contributed by Glu-253.

Belongs to the class-II aminoacyl-tRNA synthetase family. Phe-tRNA synthetase alpha subunit type 1 subfamily. In terms of assembly, tetramer of two alpha and two beta subunits. The cofactor is Mg(2+).

The protein localises to the cytoplasm. The catalysed reaction is tRNA(Phe) + L-phenylalanine + ATP = L-phenylalanyl-tRNA(Phe) + AMP + diphosphate + H(+). This Gloeobacter violaceus (strain ATCC 29082 / PCC 7421) protein is Phenylalanine--tRNA ligase alpha subunit.